The primary structure comprises 70 residues: Large ribosomal subunit protein bL31 (70 aa).

Zn(2+) contacts are provided by Cys16, Cys18, Cys38, and Cys41.

It belongs to the bacterial ribosomal protein bL31 family. Type A subfamily. In terms of assembly, part of the 50S ribosomal subunit. Zn(2+) serves as cofactor.

In terms of biological role, binds the 23S rRNA. The sequence is that of Large ribosomal subunit protein bL31 from Bifidobacterium adolescentis (strain ATCC 15703 / DSM 20083 / NCTC 11814 / E194a).